The chain runs to 154 residues: MHCPFCRHPDSRVVDSRETDEGQAIRRRRSCPECGRRFTTVETAVLAVVKRSGVTEPFSREKVIKGVRRACQGRQVDDDALNLLAQQVEDAVRATGSPEVPSHEVGLAILGPLRDLDEVAYLRFASVYRSFESAADFEREIEALRAHQDVTRSG.

Residues 3–34 (CPFCRHPDSRVVDSRETDEGQAIRRRRSCPEC) fold into a zinc finger. Residues 46-136 (LAVVKRSGVT…VYRSFESAAD (91 aa)) enclose the ATP-cone domain.

The protein belongs to the NrdR family. The cofactor is Zn(2+).

Its function is as follows. Negatively regulates transcription of bacterial ribonucleotide reductase nrd genes and operons by binding to NrdR-boxes. This chain is Transcriptional repressor NrdR, found in Mycobacterium sp. (strain JLS).